A 142-amino-acid chain; its full sequence is Small ribosomal subunit protein uS12 (142 aa).

The disordered stretch occupies residues 1 to 22 (MPTFNQLVRKGRKAAKKKSTAP). The span at 9 to 19 (RKGRKAAKKKS) shows a compositional bias: basic residues. Aspartate 102 is modified (3-methylthioaspartic acid).

It belongs to the universal ribosomal protein uS12 family. Part of the 30S ribosomal subunit. Contacts proteins S8 and S17. May interact with IF1 in the 30S initiation complex.

Functionally, with S4 and S5 plays an important role in translational accuracy. Interacts with and stabilizes bases of the 16S rRNA that are involved in tRNA selection in the A site and with the mRNA backbone. Located at the interface of the 30S and 50S subunits, it traverses the body of the 30S subunit contacting proteins on the other side and probably holding the rRNA structure together. The combined cluster of proteins S8, S12 and S17 appears to hold together the shoulder and platform of the 30S subunit. The protein is Small ribosomal subunit protein uS12 of Acetivibrio thermocellus (strain ATCC 27405 / DSM 1237 / JCM 9322 / NBRC 103400 / NCIMB 10682 / NRRL B-4536 / VPI 7372) (Clostridium thermocellum).